The sequence spans 268 residues: Regulation of nuclear pre-mRNA domain-containing protein 1A (268 aa).

Residues 1-133 enclose the CID domain; sequence MSAFSEAALE…QLRQALYGDR (133 aa).

Belongs to the UPF0400 (RTT103) family. In terms of assembly, may form a heterodimer with RPRD1B. Associates with the RNA polymerase II subunit POLR2A (via CTD phosphorylated at 'Ser-2' and 'Ser-7' of the heptad repeats).

The protein resides in the nucleus. In terms of biological role, interacts with phosphorylated C-terminal heptapeptide repeat domain (CTD) of the largest RNA polymerase II subunit POLR2A, and participates in dephosphorylation of the CTD by RPAP2. May act as a negative regulator of cyclin-D1 (CCND1) and cyclin-E (CCNE1) in the cell cycle. This Gallus gallus (Chicken) protein is Regulation of nuclear pre-mRNA domain-containing protein 1A (RPRD1A).